We begin with the raw amino-acid sequence, 93 residues long: Beta-defensin 128 (93 aa).

Positions 1-18 are cleaved as a signal peptide; the sequence is MKLFLVLIILLFEVLTDG. 3 disulfides stabilise this stretch: Cys24-Cys52, Cys32-Cys46, and Cys36-Cys53.

The protein belongs to the beta-defensin family.

It is found in the secreted. In terms of biological role, has antibacterial activity. This Pongo pygmaeus (Bornean orangutan) protein is Beta-defensin 128 (DEFB128).